The primary structure comprises 436 residues: Proline transporter 3 (436 aa).

Helical transmembrane passes span 29-49, 52-72, 118-138, 151-171, 172-192, 216-236, 254-274, 296-316, 345-365, 366-386, and 405-425; these read SWFQ…VLGY, TVMV…ATAI, LFMI…AVYV, FIAI…HLSA, LGIW…VAIV, LFTI…GMLP, LYFQ…IGYW, ALAN…FASP, GGYI…GDFM, SLTG…HMYY, and VVFF…LIAL.

It belongs to the amino acid/polyamine transporter 2 family. Amino acid/auxin permease (AAAP) (TC 2.A.18.3) subfamily. As to expression, expressed in epidermal cells of leaves, sepals and petals.

The protein localises to the cell membrane. In terms of biological role, proline transporter that mediates proline and glycine betaine transport. When expressed in a heterologous system (yeast), imports L-proline, glycine betaine and GABA across the plasma membrane. The polypeptide is Proline transporter 3 (PROT3) (Arabidopsis thaliana (Mouse-ear cress)).